We begin with the raw amino-acid sequence, 155 residues long: Cell division protein SepF (155 aa).

Positions 16–35 are enriched in acidic residues; it reads TEDEEEDVETVEESEDVEEE. The tract at residues 16–44 is disordered; the sequence is TEDEEEDVETVEESEDVEEEESKKPQFIQ.

It belongs to the SepF family. Homodimer. Interacts with FtsZ.

It is found in the cytoplasm. Its function is as follows. Cell division protein that is part of the divisome complex and is recruited early to the Z-ring. Probably stimulates Z-ring formation, perhaps through the cross-linking of FtsZ protofilaments. Its function overlaps with FtsA. The protein is Cell division protein SepF of Acetivibrio thermocellus (strain ATCC 27405 / DSM 1237 / JCM 9322 / NBRC 103400 / NCIMB 10682 / NRRL B-4536 / VPI 7372) (Clostridium thermocellum).